Consider the following 485-residue polypeptide: Glutamyl-tRNA(Gln) amidotransferase subunit A (485 aa).

Catalysis depends on charge relay system residues K79 and S154. Catalysis depends on S178, which acts as the Acyl-ester intermediate.

It belongs to the amidase family. GatA subfamily. As to quaternary structure, heterotrimer of A, B and C subunits.

The catalysed reaction is L-glutamyl-tRNA(Gln) + L-glutamine + ATP + H2O = L-glutaminyl-tRNA(Gln) + L-glutamate + ADP + phosphate + H(+). Its function is as follows. Allows the formation of correctly charged Gln-tRNA(Gln) through the transamidation of misacylated Glu-tRNA(Gln) in organisms which lack glutaminyl-tRNA synthetase. The reaction takes place in the presence of glutamine and ATP through an activated gamma-phospho-Glu-tRNA(Gln). The chain is Glutamyl-tRNA(Gln) amidotransferase subunit A from Carboxydothermus hydrogenoformans (strain ATCC BAA-161 / DSM 6008 / Z-2901).